Consider the following 431-residue polypeptide: 23S rRNA (uracil(1939)-C(5))-methyltransferase RlmD (431 aa).

In terms of domain architecture, TRAM spans 10–68; the sequence is RVTTRQIITVKVNDLDSFGQGVARHNGKALFIPGLLPEESAEVIITEDKKQFARARVSR. [4Fe-4S] cluster contacts are provided by C81, C87, C90, and C161. S-adenosyl-L-methionine-binding residues include Q264, F293, N298, E314, N341, and D362. C388 serves as the catalytic Nucleophile.

It belongs to the class I-like SAM-binding methyltransferase superfamily. RNA M5U methyltransferase family. RlmD subfamily.

It catalyses the reaction uridine(1939) in 23S rRNA + S-adenosyl-L-methionine = 5-methyluridine(1939) in 23S rRNA + S-adenosyl-L-homocysteine + H(+). Functionally, catalyzes the formation of 5-methyl-uridine at position 1939 (m5U1939) in 23S rRNA. This Salmonella typhimurium (strain LT2 / SGSC1412 / ATCC 700720) protein is 23S rRNA (uracil(1939)-C(5))-methyltransferase RlmD.